The following is a 1368-amino-acid chain: Beclin-1-like protein A (1368 aa).

Composition is skewed to low complexity over residues 24–57 (GSGS…NNGP) and 122–135 (NSII…SPSN). 5 disordered regions span residues 24–64 (GSGS…PSSE), 122–249 (NSII…SLMM), 331–431 (NKNN…STNS), 819–874 (TITP…NNNN), and 992–1048 (IDGN…NDNN). The segment covering 136–147 (AITRNNSFNMDP) has biased composition (polar residues). Residues 148–167 (NNNNNNNNNNNNNNNNNNNN) show a composition bias toward low complexity. Residues 168 to 177 (GEYMNSSIVF) show a composition bias toward polar residues. The span at 179–246 (NNVNNNNNNP…INNSVNSVNS (68 aa)) shows a compositional bias: low complexity. Low complexity-rich tracts occupy residues 992-1005 (IDGN…NDNN) and 1015-1048 (NNNN…NDNN). A coiled-coil region spans residues 1047–1150 (NNYNFENEIN…AIRDQLERVS (104 aa)).

Belongs to the beclin family.

The protein localises to the endosome membrane. Functionally, involved in autophagy. May be required to recruit the atg8-phosphatidylinositol conjugate and the atg12-atg5 conjugate to the pre-autophagosomal structure. Required for normal survival when exposed to pathogenic bacteria S.typhimurium by promoting autophagic degradation of intracellular S.typhimurium. The protein is Beclin-1-like protein A (atg6A) of Dictyostelium discoideum (Social amoeba).